The sequence spans 407 residues: Acetate kinase (407 aa).

A Mg(2+)-binding site is contributed by Asn-10. Lys-17 is a binding site for ATP. Position 91 (Arg-91) interacts with substrate. The Proton donor/acceptor role is filled by Asp-150. Residues 210-214, 285-287, and 338-342 contribute to the ATP site; these read HLGNG, DCR, and GIGEN. A Mg(2+)-binding site is contributed by Glu-392.

It belongs to the acetokinase family. Homodimer. Mg(2+) serves as cofactor. It depends on Mn(2+) as a cofactor.

It localises to the cytoplasm. The catalysed reaction is acetate + ATP = acetyl phosphate + ADP. The protein operates within metabolic intermediate biosynthesis; acetyl-CoA biosynthesis; acetyl-CoA from acetate: step 1/2. In terms of biological role, catalyzes the formation of acetyl phosphate from acetate and ATP. Can also catalyze the reverse reaction. This is Acetate kinase from Mannheimia succiniciproducens (strain KCTC 0769BP / MBEL55E).